A 340-amino-acid polypeptide reads, in one-letter code: MGFIDEVKLCLKAGDGGDGCASFRREKFVEFGGPNGGNGGKGGNIVFISDANLNTLLHFRYRRHIKADSGKNGAGRDRSGTAGKDVILKVPVGAQIIDEESEEIIVDLDKPGMEFQVAQGGKGGLGNTNFKSSTNKAPRHFTYGQPGEEKHVLLKLKVLSDVGIIGMPNAGKSKFLTRCSNSDTKVGDYPFTTVRPHLGMVKVDDSEVVIADIPGIITDAHLGVGLGHKFLKHIERCQILLHLIDVTHDDVVSAYSCIHNELELYNSDLVEKEEIVVLNKCDLLREAEILEKKNHLANYLNKEVLCLSINGDLQPILRLLSEKLKKSNSKEIDVYDPFKA.

The Obg domain maps to 1–159; it reads MGFIDEVKLC…KHVLLKLKVL (159 aa). Residues 160–329 enclose the OBG-type G domain; sequence SDVGIIGMPN…LSEKLKKSNS (170 aa). Residues 166 to 173, 191 to 195, 212 to 215, 279 to 282, and 310 to 312 each bind GTP; these read GMPNAGKS, FTTVR, DIPG, NKCD, and NGD. The Mg(2+) site is built by Ser-173 and Thr-193.

This sequence belongs to the TRAFAC class OBG-HflX-like GTPase superfamily. OBG GTPase family. As to quaternary structure, monomer. Mg(2+) is required as a cofactor.

It localises to the cytoplasm. An essential GTPase which binds GTP, GDP and possibly (p)ppGpp with moderate affinity, with high nucleotide exchange rates and a fairly low GTP hydrolysis rate. Plays a role in control of the cell cycle, stress response, ribosome biogenesis and in those bacteria that undergo differentiation, in morphogenesis control. This is GTPase Obg from Wolbachia sp. subsp. Drosophila simulans (strain wRi).